Consider the following 468-residue polypeptide: Interstitial collagenase (468 aa).

The N-terminal stretch at 1–18 (MPGLPLLLLLLWGVGSHG) is a signal peptide. The propeptide at 19–98 (FPAASETQEQ…PRCGVPDVAQ (80 aa)) is activation peptide. Residues 89-96 (PRCGVPDV) carry the Cysteine switch motif. Cys-91 serves as a coordination point for Zn(2+). Asn-119 carries an N-linked (GlcNAc...) asparagine glycan. Ca(2+)-binding residues include Asp-123 and Asp-157. Zn(2+)-binding residues include His-167 and Asp-169. Residues Asp-174, Gly-175, Glu-177, and Gln-179 each coordinate Ca(2+). His-182 provides a ligand contact to Zn(2+). The Ca(2+) site is built by Gly-189, Gly-191, and Asp-193. His-195 contributes to the Zn(2+) binding site. Residues Asp-197, Glu-198, and Asp-200 each coordinate Ca(2+). His-217 serves as a coordination point for Zn(2+). Glu-218 is an active-site residue. Residues His-221 and His-227 each coordinate Zn(2+). Thr-273 carries the phosphothreonine modification. 4 Hemopexin repeats span residues 274-323 (PKVC…WPHL), 324-370 (PNGL…FGFP), 373-421 (VNHI…FPGI), and 422-465 (GNKV…WFNC). A disulfide bridge connects residues Cys-277 and Cys-465. Ca(2+) contacts are provided by Asp-284 and Gln-328. Tyr-359 is modified (phosphotyrosine; by PKDCC). Residues Asp-377 and Asp-426 each contribute to the Ca(2+) site.

It belongs to the peptidase M10A family. It depends on Ca(2+) as a cofactor. The cofactor is Zn(2+). In terms of processing, tyrosine phosphorylated in platelets by PKDCC/VLK.

Its subcellular location is the secreted. The protein localises to the extracellular space. The protein resides in the extracellular matrix. The catalysed reaction is Cleavage of the triple helix of collagen at about three-quarters of the length of the molecule from the N-terminus, at 775-Gly-|-Ile-776 in the alpha1(I) chain. Cleaves synthetic substrates and alpha-macroglobulins at bonds where P1' is a hydrophobic residue.. Can be activated without removal of the activation peptide. Cleaves collagens of types I, II, and III at one site in the helical domain. Also cleaves collagens of types VII and X. This is Interstitial collagenase (MMP1) from Oryctolagus cuniculus (Rabbit).